Consider the following 180-residue polypeptide: 6,7-dimethyl-8-ribityllumazine synthase (180 aa).

Residues Phe-23, 61-63 (SFE), and 85-87 (AVI) each bind 5-amino-6-(D-ribitylamino)uracil. Residue 90-91 (QT) participates in (2S)-2-hydroxy-3-oxobutyl phosphate binding. The active-site Proton donor is the His-93. Phe-118 is a 5-amino-6-(D-ribitylamino)uracil binding site. Arg-132 is a (2S)-2-hydroxy-3-oxobutyl phosphate binding site.

The protein belongs to the DMRL synthase family.

The catalysed reaction is (2S)-2-hydroxy-3-oxobutyl phosphate + 5-amino-6-(D-ribitylamino)uracil = 6,7-dimethyl-8-(1-D-ribityl)lumazine + phosphate + 2 H2O + H(+). Its pathway is cofactor biosynthesis; riboflavin biosynthesis; riboflavin from 2-hydroxy-3-oxobutyl phosphate and 5-amino-6-(D-ribitylamino)uracil: step 1/2. Its function is as follows. Catalyzes the formation of 6,7-dimethyl-8-ribityllumazine by condensation of 5-amino-6-(D-ribitylamino)uracil with 3,4-dihydroxy-2-butanone 4-phosphate. This is the penultimate step in the biosynthesis of riboflavin. This is 6,7-dimethyl-8-ribityllumazine synthase from Gloeobacter violaceus (strain ATCC 29082 / PCC 7421).